Here is a 206-residue protein sequence, read N- to C-terminus: Translation machinery-associated protein 22 (206 aa).

One can recognise an SUI1 domain in the interval V98–L169. The interval S184 to K206 is disordered. Residues N196–K206 are compositionally biased toward low complexity.

Belongs to the DENR family. As to quaternary structure, interacts with the 40S ribosomal subunit.

It is found in the cytoplasm. This Vanderwaltozyma polyspora (strain ATCC 22028 / DSM 70294 / BCRC 21397 / CBS 2163 / NBRC 10782 / NRRL Y-8283 / UCD 57-17) (Kluyveromyces polysporus) protein is Translation machinery-associated protein 22 (TMA22).